A 396-amino-acid polypeptide reads, in one-letter code: Homoserine O-acetyltransferase (396 aa).

Residues 53–370 (NAILVCHALT…DRGHDAFLLE (318 aa)) enclose the AB hydrolase-1 domain. The Nucleophile role is filled by Ser-158. Arg-228 contacts substrate. Residues Asp-331 and His-364 contribute to the active site. Residue Asp-365 participates in substrate binding.

Belongs to the AB hydrolase superfamily. MetX family. In terms of assembly, homodimer.

Its subcellular location is the cytoplasm. It catalyses the reaction L-homoserine + acetyl-CoA = O-acetyl-L-homoserine + CoA. Its pathway is amino-acid biosynthesis; L-methionine biosynthesis via de novo pathway; O-acetyl-L-homoserine from L-homoserine: step 1/1. Its function is as follows. Transfers an acetyl group from acetyl-CoA to L-homoserine, forming acetyl-L-homoserine. The protein is Homoserine O-acetyltransferase of Gluconobacter oxydans (strain 621H) (Gluconobacter suboxydans).